We begin with the raw amino-acid sequence, 85 residues long: Beta-insect depressant toxin Lqh-dprIT3b (85 aa).

The first 21 residues, 1–21, serve as a signal peptide directing secretion; the sequence is MKLLLLLTISASMLIEGLVNA. In terms of domain architecture, LCN-type CS-alpha/beta spans 22–82; sequence DGYIRGGDGC…EWDYETNTCG (61 aa). 4 disulfides stabilise this stretch: C31–C81, C35–C56, C42–C63, and C46–C65. Glycine amide is present on G82.

Belongs to the long (4 C-C) scorpion toxin superfamily. Sodium channel inhibitor family. Beta subfamily. In terms of tissue distribution, expressed by the venom gland.

Its subcellular location is the secreted. In terms of biological role, depressant insect beta-toxins cause a transient contraction paralysis followed by a slow flaccid paralysis. They bind voltage-independently at site-4 of sodium channels (Nav) and block action potentials, primarily by depolarizing the axonal membrane and suppressing the sodium current. This depressant toxin is active only on insects. It is found in a relatively small amount in the venom, and its activity on insects is 10-fold higher compared to other known depressant toxins. The protein is Beta-insect depressant toxin Lqh-dprIT3b of Leiurus hebraeus (Hebrew deathstalker scorpion).